Consider the following 675-residue polypeptide: Heat shock 70 kDa protein, mitochondrial (675 aa).

Residues 1 to 51 constitute a mitochondrion transit peptide; that stretch reads MAAVLRSLRRRDVASATFSAYRSLTGSTKPAYVAQKWSCLARPFSSRPAGN. Residues 638–675 are disordered; sequence VSKIGEHMSGGSSGGSSAGGSQGGGDQAPEAEYEEVKK. Over residues 648-663 the composition is skewed to gly residues; that stretch reads GSSGGSSAGGSQGGGD. Positions 666–675 are enriched in acidic residues; that stretch reads PEAEYEEVKK.

This sequence belongs to the heat shock protein 70 family.

The protein localises to the mitochondrion. The polypeptide is Heat shock 70 kDa protein, mitochondrial (Phaseolus vulgaris (Kidney bean)).